A 347-amino-acid polypeptide reads, in one-letter code: MAAQKVGLLFGGRSGEHEVSIRSAAAIASALADPSNRDRYQVLPFYIDKEGGWHSGETAAQVLANQKPLFVEEPSDRWQFPADCRDVEVWFPILHGPNGEDGTIQGLLTLMQRPFVGSGVLGSALGMDKIAMKQAFAQASLPQVAYVAVNRSQVFSDPCRYTSLLEQIETELGYPCFVKPANLGSSVGIAKVRDRAELEAALDQAAALDRRLIIEAAIDNPREVECAVLGNDYPQASILGEITYDSDFYDYETKYTDGKAQLLIPAQLSAELQQKLQELAIAAFQAVDASGLSRLDFFLDSQGQIFINEINTLPGFTALSMYPQLWAASGVAFPDLVHRLIQLALER.

One can recognise an ATP-grasp domain in the interval 133 to 342 (KQAFAQASLP…FPDLVHRLIQ (210 aa)). ATP is bound at residue 169 to 224 (ETELGYPCFVKPANLGSSVGIAKVRDRAELEAALDQAAALDRRLIIEAAIDNPREV). Residues Asp-296, Glu-309, and Asn-311 each coordinate Mg(2+).

It belongs to the D-alanine--D-alanine ligase family. Mg(2+) serves as cofactor. Requires Mn(2+) as cofactor.

The protein localises to the cytoplasm. The catalysed reaction is 2 D-alanine + ATP = D-alanyl-D-alanine + ADP + phosphate + H(+). Its pathway is cell wall biogenesis; peptidoglycan biosynthesis. In terms of biological role, cell wall formation. The protein is D-alanine--D-alanine ligase of Synechococcus elongatus (strain ATCC 33912 / PCC 7942 / FACHB-805) (Anacystis nidulans R2).